Here is a 497-residue protein sequence, read N- to C-terminus: MGQKFSIKCKKQSKNKNTSKCQKIPKKAYEGPPGSYMVKAKYKYAASGDTDISFEEKEIMYVLEQFDEFWLKVVKQKDNKEGLVPSNYVSKQDGSPQSVEAWREIQRWEAEKSLMKIGLQKGTYIIRPSRKENSYALSVRDFDEKKKICIVKHFQIKTLQDEKGISYSVNIRNFPNILTLIQFYEKNGIGNTHIPLTDPMPDNYQPPVHFQDIEINRENIEILNEIGRGFFGSVHRAKWGRSYEVAAKMLQSSKAEREKFVLEAKIMHKLRHRKIVELLGVCTEPQDMPMLIIVEYMKNGSLKEYLKTPDGKKTNLNQMVHMMAEISEGMAYLESEKVVHRDLRADNILVANDLTRKVADFGLTELTDGSLGDQEKKTLRFPYKWTAPEAAKSKVFTSKSDVWSYGIVMFEILTWASSPYPDIPAKEVIEKVSKGYRMPNPEKFITGVCCPDEIYKIMIWCWDANPEKRPTFLVLQEKMDLLIVDTLTNNAYYSHSK.

Residues Met1–Pro25 are disordered. The SH3 domain maps to Pro33–Gly94. Residues Glu100–Met200 form the SH2 domain. Residues Ile220–Leu482 enclose the Protein kinase domain. ATP is bound by residues Ile226–Val234 and Lys248. The active-site Proton acceptor is the Asp342.

The protein belongs to the protein kinase superfamily. Tyr protein kinase family.

The catalysed reaction is L-tyrosyl-[protein] + ATP = O-phospho-L-tyrosyl-[protein] + ADP + H(+). The protein is Tyrosine-protein kinase SPK-1 of Girardia tigrina (Planarian).